Consider the following 460-residue polypeptide: A-type ATP synthase subunit B 1 (460 aa).

The protein belongs to the ATPase alpha/beta chains family. In terms of assembly, has multiple subunits with at least A(3), B(3), C, D, E, F, H, I and proteolipid K(x).

Its subcellular location is the cell membrane. Functionally, component of the A-type ATP synthase that produces ATP from ADP in the presence of a proton gradient across the membrane. The B chain is a regulatory subunit. This is A-type ATP synthase subunit B 1 from Methanospirillum hungatei JF-1 (strain ATCC 27890 / DSM 864 / NBRC 100397 / JF-1).